Consider the following 157-residue polypeptide: Type II restriction enzyme PvuII (157 aa).

Mg(2+) contacts are provided by Asp58 and Glu68.

Homodimer. Requires Mg(2+) as cofactor.

It catalyses the reaction Endonucleolytic cleavage of DNA to give specific double-stranded fragments with terminal 5'-phosphates.. Its function is as follows. A P subtype restriction enzyme that recognizes the double-stranded sequence 5'-CAGCTG-3' and cleaves after G-3. In Proteus hauseri, this protein is Type II restriction enzyme PvuII (pvuIIR).